An 858-amino-acid chain; its full sequence is Bifunctional uridylyltransferase/uridylyl-removing enzyme (858 aa).

The uridylyltransferase stretch occupies residues 1–324 (MSAHAAPSPE…PATSGITRVL (324 aa)). The uridylyl-removing stretch occupies residues 325-681 (SADRFVEKQG…ARPSPIGDAL (357 aa)). One can recognise an HD domain in the interval 443–565 (VDQHILMVLR…VGNERYLTAL (123 aa)). ACT domains lie at 682-763 (QVLV…PSKG) and 790-858 (ILSV…AIAV).

This sequence belongs to the GlnD family. Mg(2+) is required as a cofactor.

It catalyses the reaction [protein-PII]-L-tyrosine + UTP = [protein-PII]-uridylyl-L-tyrosine + diphosphate. It carries out the reaction [protein-PII]-uridylyl-L-tyrosine + H2O = [protein-PII]-L-tyrosine + UMP + H(+). Its activity is regulated as follows. Uridylyltransferase (UTase) activity is inhibited by glutamine, while glutamine activates uridylyl-removing (UR) activity. Its function is as follows. Modifies, by uridylylation and deuridylylation, the PII regulatory proteins (GlnB and homologs), in response to the nitrogen status of the cell that GlnD senses through the glutamine level. Under low glutamine levels, catalyzes the conversion of the PII proteins and UTP to PII-UMP and PPi, while under higher glutamine levels, GlnD hydrolyzes PII-UMP to PII and UMP (deuridylylation). Thus, controls uridylylation state and activity of the PII proteins, and plays an important role in the regulation of nitrogen assimilation and metabolism. The chain is Bifunctional uridylyltransferase/uridylyl-removing enzyme from Burkholderia orbicola (strain AU 1054).